A 469-amino-acid polypeptide reads, in one-letter code: Cytochrome c biogenesis protein CcsB (469 aa).

A run of 3 helical transmembrane segments spans residues 30–50 (LRLAIGLLLAIAVLSATGTVI), 89–109 (TPWFLAILILFGSSLAACSLT), and 175–195 (IGPILVHVSMLLILLGAIWGS).

Belongs to the Ccs1/CcsB family. As to quaternary structure, may interact with CcsA.

It is found in the cellular thylakoid membrane. Required during biogenesis of c-type cytochromes (cytochrome c6 and cytochrome f) at the step of heme attachment. In Synechococcus sp. (strain JA-2-3B'a(2-13)) (Cyanobacteria bacterium Yellowstone B-Prime), this protein is Cytochrome c biogenesis protein CcsB.